An 81-amino-acid polypeptide reads, in one-letter code: MATLILKQTLIILLIIFSLQTLSSQARILRSYRAVSMGNMDSQVLLHELGFDLSKFKGHNERRFLVSSDRVSPGGPDPQHH.

Positions 1 to 26 (MATLILKQTLIILLIIFSLQTLSSQA) are cleaved as a signal peptide. A hydroxyproline mark is found at Pro-73 and Pro-76. O-linked (Ara...) hydroxyproline glycosylation occurs at Pro-76.

It belongs to the CLV3/ESR signal peptide family. Post-translationally, the O-glycosylation (arabinosylation) of the hydroxyproline Pro-76 enhances binding affinity of the CLE5p peptide for its receptor. Mostly expressed in roots, and, to a lower extent, in seedlings, stems, apex, flowers and siliques.

The protein resides in the secreted. It localises to the extracellular space. Its function is as follows. Extracellular signal peptide that regulates cell fate. The protein is CLAVATA3/ESR (CLE)-related protein 5 of Arabidopsis thaliana (Mouse-ear cress).